The following is a 597-amino-acid chain: Aspartate--tRNA(Asp/Asn) ligase (597 aa).

Glu-172 contributes to the L-aspartate binding site. The tract at residues 196–199 (QLFK) is aspartate. An L-aspartate-binding site is contributed by Arg-218. ATP is bound by residues 218-220 (RDE) and Gln-227. His-454 serves as a coordination point for L-aspartate. Residue Glu-488 coordinates ATP. Position 495 (Arg-495) interacts with L-aspartate. 540 to 543 (GLDR) serves as a coordination point for ATP.

The protein belongs to the class-II aminoacyl-tRNA synthetase family. Type 1 subfamily. In terms of assembly, homodimer.

The protein resides in the cytoplasm. It catalyses the reaction tRNA(Asx) + L-aspartate + ATP = L-aspartyl-tRNA(Asx) + AMP + diphosphate. Its function is as follows. Aspartyl-tRNA synthetase with relaxed tRNA specificity since it is able to aspartylate not only its cognate tRNA(Asp) but also tRNA(Asn). Reaction proceeds in two steps: L-aspartate is first activated by ATP to form Asp-AMP and then transferred to the acceptor end of tRNA(Asp/Asn). This Chromobacterium violaceum (strain ATCC 12472 / DSM 30191 / JCM 1249 / CCUG 213 / NBRC 12614 / NCIMB 9131 / NCTC 9757 / MK) protein is Aspartate--tRNA(Asp/Asn) ligase.